A 336-amino-acid chain; its full sequence is Holliday junction branch migration complex subunit RuvB (336 aa).

Residues 4–184 (SDRLISSQSI…FGIVQRLEYY (181 aa)) are large ATPase domain (RuvB-L). ATP-binding positions include I23, R24, G65, K68, T69, T70, 131-133 (EDY), R174, Y184, and R221. T69 lines the Mg(2+) pocket. Positions 185–255 (SVDSLTQIVA…MAQQALEMLE (71 aa)) are small ATPAse domain (RuvB-S). Residues 258 to 336 (QHGFDLMDRK…HFGFSAIEQE (79 aa)) are head domain (RuvB-H). 2 residues coordinate DNA: R313 and R318.

This sequence belongs to the RuvB family. As to quaternary structure, homohexamer. Forms an RuvA(8)-RuvB(12)-Holliday junction (HJ) complex. HJ DNA is sandwiched between 2 RuvA tetramers; dsDNA enters through RuvA and exits via RuvB. An RuvB hexamer assembles on each DNA strand where it exits the tetramer. Each RuvB hexamer is contacted by two RuvA subunits (via domain III) on 2 adjacent RuvB subunits; this complex drives branch migration. In the full resolvosome a probable DNA-RuvA(4)-RuvB(12)-RuvC(2) complex forms which resolves the HJ.

It localises to the cytoplasm. The catalysed reaction is ATP + H2O = ADP + phosphate + H(+). In terms of biological role, the RuvA-RuvB-RuvC complex processes Holliday junction (HJ) DNA during genetic recombination and DNA repair, while the RuvA-RuvB complex plays an important role in the rescue of blocked DNA replication forks via replication fork reversal (RFR). RuvA specifically binds to HJ cruciform DNA, conferring on it an open structure. The RuvB hexamer acts as an ATP-dependent pump, pulling dsDNA into and through the RuvAB complex. RuvB forms 2 homohexamers on either side of HJ DNA bound by 1 or 2 RuvA tetramers; 4 subunits per hexamer contact DNA at a time. Coordinated motions by a converter formed by DNA-disengaged RuvB subunits stimulates ATP hydrolysis and nucleotide exchange. Immobilization of the converter enables RuvB to convert the ATP-contained energy into a lever motion, pulling 2 nucleotides of DNA out of the RuvA tetramer per ATP hydrolyzed, thus driving DNA branch migration. The RuvB motors rotate together with the DNA substrate, which together with the progressing nucleotide cycle form the mechanistic basis for DNA recombination by continuous HJ branch migration. Branch migration allows RuvC to scan DNA until it finds its consensus sequence, where it cleaves and resolves cruciform DNA. This Legionella pneumophila subsp. pneumophila (strain Philadelphia 1 / ATCC 33152 / DSM 7513) protein is Holliday junction branch migration complex subunit RuvB.